Consider the following 506-residue polypeptide: 26S proteasome non-ATPase regulatory subunit 5 (506 aa).

The protein belongs to the proteasome subunit S5B/HSM3 family. As to quaternary structure, interacts with PI31; this interaction is increased by PI31 ADP-ribosylation. Interacts with Rpt2.

Its function is as follows. Acts as a chaperone during the assembly of the 26S proteasome. The polypeptide is 26S proteasome non-ATPase regulatory subunit 5 (Drosophila melanogaster (Fruit fly)).